The following is a 219-amino-acid chain: MDFPPKVVASVTSKDDAKEAIALGADVVEVRVDLVGGDGPGLVESIYYDIGCPIIVTIRPKFEGGEFDGTDAERVQLFKKLTPYADFADFELRAKNLDELLTTITGTDAVPIVSYHDFDRTPSNEEMLSIINRSVEKGAIGKLAVMPKDMTDVLRLLEITLKSKRPVCTISMGSLGQHSRLVAPVYGSLLTYGYVRRPVAPGQIRVDQLLEGLRILGLR.

3-dehydroquinate-binding positions include S10, E29–R31, and R59. H116 serves as the catalytic Proton donor/acceptor. The active-site Schiff-base intermediate with substrate is the K142. 3-dehydroquinate-binding residues include R180 and Q203.

Belongs to the type-I 3-dehydroquinase family. In terms of assembly, homodimer.

It carries out the reaction 3-dehydroquinate = 3-dehydroshikimate + H2O. It functions in the pathway metabolic intermediate biosynthesis; chorismate biosynthesis; chorismate from D-erythrose 4-phosphate and phosphoenolpyruvate: step 3/7. Functionally, involved in the third step of the chorismate pathway, which leads to the biosynthesis of aromatic amino acids. Catalyzes the cis-dehydration of 3-dehydroquinate (DHQ) and introduces the first double bond of the aromatic ring to yield 3-dehydroshikimate. In Methanocella arvoryzae (strain DSM 22066 / NBRC 105507 / MRE50), this protein is 3-dehydroquinate dehydratase.